A 748-amino-acid chain; its full sequence is Protein REPRESSOR OF SILENCING 3 (748 aa).

An RRM domain is found at 10–86 (VRLHVGGLGE…GRLRLEKAKE (77 aa)). Disordered regions lie at residues 244-318 (KSIL…QSID), 350-531 (GSSK…VSDT), 579-600 (VDEEEAGKGPLKASNKSTGGSS), and 729-748 (EWAKAKKALSEPRRKKNSEE). Residues 266 to 288 (THPSKNRQTISLEETGRQESSQA) are compositionally biased toward polar residues. The segment covering 294-314 (KPSEVVPDKSSDEPSRTKDLE) has biased composition (basic and acidic residues). Residues 373-382 (LKKKTKRKRV) show a composition bias toward basic residues. Composition is skewed to acidic residues over residues 403–416 (DTMADDIERDDSDA), 439–472 (DDSDAVEDDTAIDSMADDPASDSVAESDDGDAVE), and 491–518 (ESDDGDNVEDDTAIDSMCDDTANDDVGS). Polar residues predominate over residues 520 to 531 (DSGSLADTVSDT).

Ubiquitously expressed.

It localises to the nucleus. Its subcellular location is the nucleolus. The protein resides in the nucleoplasm. Its function is as follows. RNA-binding protein required for DNA demethylation and to eluviate siRNA-mediated transcriptional gene silencing (TGS), probably by guiding ROS1. Can bind specifically single stranded G-rich RNAs of 21-, 24- or 26-nt corresponding to promoter sequence of target genes; this interaction directs demethylation of target sequences. This is Protein REPRESSOR OF SILENCING 3 from Arabidopsis thaliana (Mouse-ear cress).